A 598-amino-acid polypeptide reads, in one-letter code: Beta-hexosaminidase A (598 aa).

The first 11 residues, 1-11 (MSFITSAHATA), serve as a signal peptide directing secretion. The active site involves Asp-305.

It belongs to the glycosyl hydrolase 3 family.

It catalyses the reaction Hydrolysis of terminal non-reducing N-acetyl-D-hexosamine residues in N-acetyl-beta-D-hexosaminides.. Most active towards p-nitrophenyl-N-acetyl-beta-D-glucosaminide(PNP-beta-GlcNAc) and diacetylchitobiose. The polypeptide is Beta-hexosaminidase A (cht60) (Pseudoalteromonas piscicida).